The primary structure comprises 89 residues: Small ribosomal subunit protein uS15 (89 aa).

The protein belongs to the universal ribosomal protein uS15 family. In terms of assembly, part of the 30S ribosomal subunit. Forms a bridge to the 50S subunit in the 70S ribosome, contacting the 23S rRNA.

In terms of biological role, one of the primary rRNA binding proteins, it binds directly to 16S rRNA where it helps nucleate assembly of the platform of the 30S subunit by binding and bridging several RNA helices of the 16S rRNA. Forms an intersubunit bridge (bridge B4) with the 23S rRNA of the 50S subunit in the ribosome. This chain is Small ribosomal subunit protein uS15, found in Chlamydia felis (strain Fe/C-56) (Chlamydophila felis).